Consider the following 101-residue polypeptide: Apolipoprotein C-II (101 aa).

A signal peptide spans 1-22; sequence MGTRFLLALFLVLLVLGFEVQG. Residues 66–74 form a lipid binding region; the sequence is TVDEKLRDM. The interval 78-101 is lipoprotein lipase cofactor; that stretch reads STAAMSTYAGILTDQVLSMLKGEE.

It belongs to the apolipoprotein C2 family. In terms of processing, proapolipoprotein C-II is synthesized as a sialic acid containing glycoprotein which is subsequently desialylated prior to its proteolytic processing. Post-translationally, proapolipoprotein C-II, the major form found in plasma undergoes proteolytic cleavage of its N-terminal hexapeptide to generate apolipoprotein C-II, which occurs as the minor form in plasma.

It localises to the secreted. Its function is as follows. Component of chylomicrons, very low-density lipoproteins (VLDL), low-density lipoproteins (LDL), and high-density lipoproteins (HDL) in plasma. Plays an important role in lipoprotein metabolism as an activator of lipoprotein lipase. Both proapolipoprotein C-II and apolipoprotein C-II can activate lipoprotein lipase. This is Apolipoprotein C-II (APOC2) from Plecturocebus moloch (Dusky titi monkey).